We begin with the raw amino-acid sequence, 373 residues long: Queuine tRNA-ribosyltransferase (373 aa).

Asp-93 serves as the catalytic Proton acceptor. Residues 93–97 (DSGGF), Asp-147, Gln-189, and Gly-216 each bind substrate. The segment at 247–253 (GVGAPED) is RNA binding. Catalysis depends on Asp-266, which acts as the Nucleophile. Residues 271–275 (TRIAR) form an RNA binding; important for wobble base 34 recognition region. 4 residues coordinate Zn(2+): Cys-304, Cys-306, Cys-309, and His-335.

It belongs to the queuine tRNA-ribosyltransferase family. As to quaternary structure, homodimer. Within each dimer, one monomer is responsible for RNA recognition and catalysis, while the other monomer binds to the replacement base PreQ1. Zn(2+) is required as a cofactor.

The catalysed reaction is 7-aminomethyl-7-carbaguanine + guanosine(34) in tRNA = 7-aminomethyl-7-carbaguanosine(34) in tRNA + guanine. It functions in the pathway tRNA modification; tRNA-queuosine biosynthesis. Its function is as follows. Catalyzes the base-exchange of a guanine (G) residue with the queuine precursor 7-aminomethyl-7-deazaguanine (PreQ1) at position 34 (anticodon wobble position) in tRNAs with GU(N) anticodons (tRNA-Asp, -Asn, -His and -Tyr). Catalysis occurs through a double-displacement mechanism. The nucleophile active site attacks the C1' of nucleotide 34 to detach the guanine base from the RNA, forming a covalent enzyme-RNA intermediate. The proton acceptor active site deprotonates the incoming PreQ1, allowing a nucleophilic attack on the C1' of the ribose to form the product. After dissociation, two additional enzymatic reactions on the tRNA convert PreQ1 to queuine (Q), resulting in the hypermodified nucleoside queuosine (7-(((4,5-cis-dihydroxy-2-cyclopenten-1-yl)amino)methyl)-7-deazaguanosine). In Halothermothrix orenii (strain H 168 / OCM 544 / DSM 9562), this protein is Queuine tRNA-ribosyltransferase.